We begin with the raw amino-acid sequence, 277 residues long: MLNIGCHLSSSKGFKNMGENALKIGANTFQFFTRNPRGSKAKDIDENDVKEFLELAKENKFCKILAHAPYTLNACSADERNREFAIEIMADDLKRMEYIPNNLYNFHPGSHVKQGTEVGIEYISSALNSILKKDQTTKVLLETMSGKGTEVGRNFEEIAEIIKRVELKEHVGVCLDTCHIHDAGYDIVNELDEVLEEFDSMIGLDKLYAIHLNDSKNPFESHKDRHETIGNGYIGLDALTNIINHPKLCHLPFFLETPNELEGYKREIELLKSAYKK.

Residues histidine 67, histidine 107, glutamate 142, aspartate 176, histidine 179, histidine 211, aspartate 224, histidine 226, and glutamate 256 each contribute to the Zn(2+) site.

The protein belongs to the AP endonuclease 2 family. Requires Zn(2+) as cofactor.

It catalyses the reaction Endonucleolytic cleavage to 5'-phosphooligonucleotide end-products.. Its function is as follows. Endonuclease IV plays a role in DNA repair. It cleaves phosphodiester bonds at apurinic or apyrimidinic (AP) sites, generating a 3'-hydroxyl group and a 5'-terminal sugar phosphate. The sequence is that of Probable endonuclease 4 from Clostridium botulinum (strain Alaska E43 / Type E3).